A 177-amino-acid chain; its full sequence is Alkyl hydroperoxide reductase AhpD (177 aa).

Cysteine 130 functions as the Proton donor in the catalytic mechanism. An intrachain disulfide couples cysteine 130 to cysteine 133. Cysteine 133 serves as the catalytic Cysteine sulfenic acid (-SOH) intermediate.

The protein belongs to the AhpD family. Homotrimer.

It catalyses the reaction N(6)-[(R)-dihydrolipoyl]-L-lysyl-[lipoyl-carrier protein] + a hydroperoxide = N(6)-[(R)-lipoyl]-L-lysyl-[lipoyl-carrier protein] + an alcohol + H2O. Its function is as follows. Antioxidant protein with alkyl hydroperoxidase activity. Required for the reduction of the AhpC active site cysteine residues and for the regeneration of the AhpC enzyme activity. The protein is Alkyl hydroperoxide reductase AhpD of Mycolicibacterium smegmatis (strain ATCC 700084 / mc(2)155) (Mycobacterium smegmatis).